We begin with the raw amino-acid sequence, 256 residues long: Thrombin-like enzyme cerastocytin (256 aa).

Positions 1-18 are cleaved as a signal peptide; sequence MVLISVLASLLVLQLSYA. Residues 19–24 constitute a propeptide that is removed on maturation; sequence QKSSEL. Positions 25–247 constitute a Peptidase S1 domain; that stretch reads VIGGAECNIN…YTDWIRNIIA (223 aa). 5 disulfide bridges follow: Cys-31–Cys-161, Cys-98–Cys-254, Cys-140–Cys-208, Cys-172–Cys-187, and Cys-198–Cys-223. Asn-44 is a glycosylation site (N-linked (GlcNAc...) asparagine). Residues His-65 and Asp-108 each act as charge relay system in the active site. 3 N-linked (GlcNAc...) asparagine glycosylation sites follow: Asn-119, Asn-120, and Asn-152. Catalysis depends on Ser-202, which acts as the Charge relay system.

This sequence belongs to the peptidase S1 family. Snake venom subfamily. In terms of assembly, monomer. As to expression, expressed by the venom gland.

Its subcellular location is the secreted. Its platelets aggregating activity is inhibited by chlorpromazine, theophylline mepacrine. Its platelet aggregating activity and its amidolytic activity are inhibited by PMSF, TPCK, TLCK and soybean trypsin inhibitors. Is unaffected by hirudin or by antithrombin-III in the presence of heparin. Functionally, thrombin-like snake venom serine protease which potently induces platelet aggregation and has fibrinogenolytic activities. Clots purified fibrinogen and hydrolyzes alpha-chains (FGA). High concentrations of this enzyme also cleave prothrombin (F2) and factor X (F10). Is also able to activate factor XIII (F8). This Cerastes cerastes (Horned desert viper) protein is Thrombin-like enzyme cerastocytin.